Here is a 176-residue protein sequence, read N- to C-terminus: Large ribosomal subunit protein uL6 (176 aa).

It belongs to the universal ribosomal protein uL6 family. In terms of assembly, part of the 50S ribosomal subunit.

Its function is as follows. This protein binds to the 23S rRNA, and is important in its secondary structure. It is located near the subunit interface in the base of the L7/L12 stalk, and near the tRNA binding site of the peptidyltransferase center. This chain is Large ribosomal subunit protein uL6, found in Burkholderia cenocepacia (strain HI2424).